We begin with the raw amino-acid sequence, 267 residues long: Undecaprenyl-diphosphatase (267 aa).

Transmembrane regions (helical) follow at residues 39–59 (QGLA…ILYF), 87–107 (WMIA…KDFI), 111–131 (LRSA…LWWV), 149–169 (ALFI…RSGA), 189–209 (FLMS…KLVT), 218–238 (ALSI…HAFL), and 244–264 (VGMM…IAFL).

Belongs to the UppP family.

It is found in the cell inner membrane. The catalysed reaction is di-trans,octa-cis-undecaprenyl diphosphate + H2O = di-trans,octa-cis-undecaprenyl phosphate + phosphate + H(+). Catalyzes the dephosphorylation of undecaprenyl diphosphate (UPP). Confers resistance to bacitracin. This Photobacterium profundum (strain SS9) protein is Undecaprenyl-diphosphatase.